The chain runs to 321 residues: RNA/RNP complex-1-interacting phosphatase (321 aa).

Over residues methionine 1 to glycine 11 the composition is skewed to basic residues. The disordered stretch occupies residues methionine 1 to arginine 27. The 148-residue stretch at phenylalanine 60 to arginine 207 folds into the Tyrosine-protein phosphatase domain. The Phosphocysteine intermediate role is filled by cysteine 151. Substrate is bound at residue threonine 152 to arginine 157. The Proton donor/acceptor role is filled by arginine 157. Positions lysine 205 to tyrosine 262 are disordered. Residues proline 233–glycine 245 show a composition bias toward basic residues. Positions glutamine 251 to tyrosine 262 are enriched in polar residues.

Belongs to the protein-tyrosine phosphatase family. Non-receptor class dual specificity subfamily. As to quaternary structure, monomer. May interact with SFRS7 and SFRS9/SRP30C.

It is found in the nucleus. The protein resides in the nucleus speckle. In terms of biological role, possesses RNA 5'-triphosphatase and diphosphatase activities, but displays a poor protein-tyrosine phosphatase activity. In addition, has phosphatase activity with ATP, ADP and O-methylfluorescein phosphate (in vitro). Binds to RNA. May participate in nuclear mRNA metabolism. This Mus musculus (Mouse) protein is RNA/RNP complex-1-interacting phosphatase (Dusp11).